A 262-amino-acid chain; its full sequence is Dihydroorotate dehydrogenase B (NAD(+)), electron transfer subunit (262 aa).

Residues 2-102 (SKVFDAKVLA…MGPLGRGFTL (101 aa)) enclose the FAD-binding FR-type domain. Residues 53 to 56 (RPIS), 70 to 72 (LFR), and 77 to 78 (GT) each bind FAD. [2Fe-2S] cluster-binding residues include Cys-224, Cys-229, Cys-232, and Cys-248.

This sequence belongs to the PyrK family. As to quaternary structure, heterotetramer of 2 PyrK and 2 PyrD type B subunits. However, the metal reductase complex seems to be composed of a heterooctamer of 4 PyrK and 4 PyrD subunits. The cofactor is FAD. Requires [2Fe-2S] cluster as cofactor.

It localises to the cytoplasm. The protein operates within pyrimidine metabolism; UMP biosynthesis via de novo pathway; orotate from (S)-dihydroorotate (NAD(+) route): step 1/1. In terms of biological role, responsible for channeling the electrons from the oxidation of dihydroorotate from the FMN redox center in the PyrD type B subunit to the ultimate electron acceptor NAD(+). Functionally, together with PyrD, also forms a metal reductase complex able to reduce Fe(III)-chelates to Fe(II)-chelates, as well as soluble Cr(VI) and U(VI), using NADH as electron donor. To a lesser extent, can also use NADPH as an electron donor. Is unable to reduce riboflavin and FMN with NADH as electron donor. May have an in vivo role in metal reduction in D.reducens, which is an organism capable of reducing contaminant heavy metals and radionuclides. This Desulforamulus reducens (strain ATCC BAA-1160 / DSM 100696 / MI-1) (Desulfotomaculum reducens) protein is Dihydroorotate dehydrogenase B (NAD(+)), electron transfer subunit.